A 404-amino-acid polypeptide reads, in one-letter code: G-protein coupled receptor 143 (404 aa).

Over 1–28 the chain is Extracellular; sequence MASPRLGTFCCPTRDAATQLVLSFQPRA. Residues 29–49 traverse the membrane as a helical segment; it reads FHALCLGSGGLRLALGLLQLL. The Cytoplasmic portion of the chain corresponds to 50–78; that stretch reads PGRRPAGPGSPATSPPASVRILRAAAACD. Residues 79–99 traverse the membrane as a helical segment; the sequence is LLGCLGMVIRSTVWLGFPNFV. At 100-124 the chain is on the extracellular side; sequence DSVSDMNHTEIWPAAFCVGSAMWIQ. Asparagine 106 is a glycosylation site (N-linked (GlcNAc...) asparagine). A helical transmembrane segment spans residues 125–145; the sequence is LLYSACFWWLFCYAVDAYLVI. Topologically, residues 146-149 are cytoplasmic; the sequence is RRSA. A helical membrane pass occupies residues 150 to 170; the sequence is GLSTILLYHIMAWGLATLLCV. The Extracellular segment spans residues 171-191; that stretch reads EGAAMLYYPSVSRCERGLDHA. A helical membrane pass occupies residues 192-212; sequence IPHYVTMYLPLLLVLVANPIL. Over 213–248 the chain is Cytoplasmic; that stretch reads FQKTVTAVASLLKGRQGIYTENERRMGAVIKIRFFK. Residues 221 to 238 are necessary for its G protein-activation ability and normal distribution of melanosomes; sequence ASLLKGRQGIYTENERRM. The lysosomal/melanosomal membrane localization signal motif lies at 222–231; sequence SLLKGRQGIY. A helical membrane pass occupies residues 249-269; the sequence is IMLVLIICWLSNIINESLLFY. Residues 270 to 292 are Extracellular-facing; sequence LEMQTDINGGSLKPVRTAAKTTW. A helical transmembrane segment spans residues 293–313; that stretch reads FIMGILNPAQGFLLSLAFYGW. Residues 314-404 lie on the Cytoplasmic side of the membrane; that stretch reads TGCSLGFQSP…DPALPTHGDL (91 aa). Residues 329–330 carry the lysosomal/melanosomal membrane localization signal motif; it reads WE. The disordered stretch occupies residues 338–404; that stretch reads EGAHPSPLMP…DPALPTHGDL (67 aa). Polar residues predominate over residues 355 to 366; sequence KVSQVGGQTSDE.

The protein belongs to the G-protein coupled receptor OA family. As to quaternary structure, interacts with heterotrimeric G(i) proteins. Interacts with ARRB1 and ARRB2. Interacts with MLANA. In terms of processing, glycosylated. Phosphorylated. In terms of tissue distribution, expressed at high levels in the retina, including the retinal pigment epithelium (RPE), and in melanocytes. Weak expression is observed in brain and adrenal gland.

The protein resides in the melanosome membrane. Its subcellular location is the lysosome membrane. It localises to the apical cell membrane. In terms of biological role, receptor for tyrosine, L-DOPA and dopamine. After binding to L-DOPA, stimulates Ca(2+) influx into the cytoplasm, increases secretion of the neurotrophic factor SERPINF1 and relocalizes beta arrestin at the plasma membrane; this ligand-dependent signaling occurs through a G(q)-mediated pathway in melanocytic cells. Its activity is mediated by G proteins which activate the phosphoinositide signaling pathway. Also plays a role as an intracellular G protein-coupled receptor involved in melanosome biogenesis, organization and transport. This Homo sapiens (Human) protein is G-protein coupled receptor 143 (GPR143).